Consider the following 575-residue polypeptide: Transmembrane protein 108 (575 aa).

The chain crosses the membrane as a helical span at residues 9–29 (YCQLLSFLLILALTEALAFAI). Positions 31–169 (EPSPRESLQV…TTTRRPPRPP (139 aa)) are interaction with SH3GL2. The disordered stretch occupies residues 65 to 398 (MLTPNPDGPP…PSRVSESTIS (334 aa)). The segment covering 74-87 (PSQAAAPMATPTPR) has biased composition (low complexity). The segment covering 95 to 115 (HTISTIAATVTAPHSESSLST) has biased composition (polar residues). Positions 146-160 (PPGATSRPTTAPPRT) are enriched in low complexity. Positions 173-407 (RKGAGNSSRP…SGAKEETVAT (235 aa)) are interaction with DST (isoform 1). Residues 244-271 (YSSSPQPQTVAATTVPSNTSWAPTTTSL) show a composition bias toward polar residues. The segment covering 290–318 (TFTSQGGTPDATAASGAPVSPQAAPVPSQ) has biased composition (low complexity). Positions 329 to 352 (PSHSDSWLTVTPGTSRPLSTSSGV) are enriched in polar residues. The segment covering 353–366 (FTAATGPTPAAFDT) has biased composition (low complexity). Residues 367-398 (SVSAPSQGIPQGASTTPQAPTHPSRVSESTIS) show a composition bias toward polar residues. The chain crosses the membrane as a helical span at residues 469–489 (IAWVILAISVPISSCSVLLTV). The tract at residues 490–575 (CCMKRKKKTA…FVGNDQVSEI (86 aa)) is interaction with CYFIP2.

In terms of assembly, interacts with DST (isoform 1). Interacts with SH3GL2. Interacts (via N-terminus) with CYFIP1 and CYFIP2; the interactions associate TMEM108 with the WAVE1 complex. Glycosylated.

The protein resides in the membrane. The protein localises to the postsynaptic density. It localises to the endosome membrane. It is found in the cell projection. Its subcellular location is the axon. The protein resides in the dendrite. The protein localises to the early endosome. Its function is as follows. Transmembrane protein required for proper cognitive functions. Involved in the development of dentate gyrus (DG) neuron circuitry, is necessary for AMPA receptors surface expression and proper excitatory postsynaptic currents of DG granule neurons. Regulates the organization and stability of the microtubule network of sensory neurons to allow axonal transport. Through the interaction with DST, mediates the docking of the dynein/dynactin motor complex to vesicle cargos for retrograde axonal transport. In hippocampal neurons, required for BDNF-dependent dendrite outgrowth. Cooperates with SH3GL2 and recruits the WAVE1 complex to facilitate actin-dependent BDNF:NTRK2 early endocytic trafficking and mediate signaling from early endosomes. The sequence is that of Transmembrane protein 108 from Homo sapiens (Human).